Here is a 362-residue protein sequence, read N- to C-terminus: Peptide chain release factor 1 (362 aa).

Residue glutamine 237 is modified to N5-methylglutamine. A compositionally biased stretch (basic and acidic residues) spans 284 to 295 (EEEKRQAEETST). The disordered stretch occupies residues 284 to 304 (EEEKRQAEETSTRRNLVASGD).

Belongs to the prokaryotic/mitochondrial release factor family. Methylated by PrmC. Methylation increases the termination efficiency of RF1.

The protein localises to the cytoplasm. Peptide chain release factor 1 directs the termination of translation in response to the peptide chain termination codons UAG and UAA. The polypeptide is Peptide chain release factor 1 (Pseudoalteromonas atlantica (strain T6c / ATCC BAA-1087)).